The primary structure comprises 688 residues: Elongation factor G (688 aa).

Residues 8 to 282 (DKFRNFGIMA…GVVDYLPSPL (275 aa)) form the tr-type G domain. GTP contacts are provided by residues 17–24 (AHIDAGKT), 81–85 (DTPGH), and 135–138 (NKMD).

This sequence belongs to the TRAFAC class translation factor GTPase superfamily. Classic translation factor GTPase family. EF-G/EF-2 subfamily.

The protein resides in the cytoplasm. Functionally, catalyzes the GTP-dependent ribosomal translocation step during translation elongation. During this step, the ribosome changes from the pre-translocational (PRE) to the post-translocational (POST) state as the newly formed A-site-bound peptidyl-tRNA and P-site-bound deacylated tRNA move to the P and E sites, respectively. Catalyzes the coordinated movement of the two tRNA molecules, the mRNA and conformational changes in the ribosome. The chain is Elongation factor G from Clostridium botulinum (strain Eklund 17B / Type B).